The sequence spans 78 residues: Acyl carrier protein (78 aa).

In terms of domain architecture, Carrier spans 2–77 (SDILERVRKI…DAVKFITEKT (76 aa)). Ser-37 is subject to O-(pantetheine 4'-phosphoryl)serine.

It belongs to the acyl carrier protein (ACP) family. 4'-phosphopantetheine is transferred from CoA to a specific serine of apo-ACP by AcpS. This modification is essential for activity because fatty acids are bound in thioester linkage to the sulfhydryl of the prosthetic group.

It localises to the cytoplasm. The protein operates within lipid metabolism; fatty acid biosynthesis. Functionally, carrier of the growing fatty acid chain in fatty acid biosynthesis. The sequence is that of Acyl carrier protein from Caulobacter vibrioides (strain ATCC 19089 / CIP 103742 / CB 15) (Caulobacter crescentus).